A 269-amino-acid chain; its full sequence is Tryptophan synthase alpha chain (269 aa).

Catalysis depends on proton acceptor residues Glu49 and Asp60.

This sequence belongs to the TrpA family. In terms of assembly, tetramer of two alpha and two beta chains.

The catalysed reaction is (1S,2R)-1-C-(indol-3-yl)glycerol 3-phosphate + L-serine = D-glyceraldehyde 3-phosphate + L-tryptophan + H2O. Its pathway is amino-acid biosynthesis; L-tryptophan biosynthesis; L-tryptophan from chorismate: step 5/5. Its function is as follows. The alpha subunit is responsible for the aldol cleavage of indoleglycerol phosphate to indole and glyceraldehyde 3-phosphate. This Ectopseudomonas mendocina (strain ymp) (Pseudomonas mendocina) protein is Tryptophan synthase alpha chain.